A 329-amino-acid chain; its full sequence is Prostaglandin reductase 1 (329 aa).

Threonine 18 carries the post-translational modification Phosphothreonine. Residues 152-155 (GAVG), lysine 178, tyrosine 193, asparagine 217, 239-245 (CGAISQY), 270-272 (FIV), and asparagine 321 contribute to the NADP(+) site. N6-(2-hydroxyisobutyryl)lysine; alternate is present on lysine 178. The residue at position 178 (lysine 178) is an N6-acetyllysine; alternate.

It belongs to the NADP-dependent oxidoreductase L4BD family. Monomer or homodimer.

The protein resides in the cytoplasm. It carries out the reaction 13,14-dihydro-15-oxo-prostaglandin E1 + NADP(+) = 15-oxoprostaglandin E1 + NADPH + H(+). It catalyses the reaction 13,14-dihydro-15-oxo-prostaglandin E2 + NADP(+) = 15-oxoprostaglandin E2 + NADPH + H(+). The enzyme catalyses 13,14-dihydro-15-oxo-prostaglandin F1alpha + NADP(+) = 15-oxoprostaglandin F1alpha + NADPH + H(+). The catalysed reaction is 13,14-dihydro-15-oxo-PGF2alpha + NADP(+) = 15-oxoprostaglandin F2alpha + NADPH + H(+). It carries out the reaction leukotriene B4 + NADP(+) = 12-oxo-leukotriene B4 + NADPH + H(+). It catalyses the reaction 20-hydroxy-leukotriene B4 + NADP(+) = 12-oxo-20-hydroxy-leukotriene B4 + NADPH + H(+). The enzyme catalyses 6-trans-leukotriene B4 + NADP(+) = 12-oxo-(5S)-hydroxy-(6E,8E,10E,14Z)-eicosatetraenoate + NADPH + H(+). The catalysed reaction is (5S,12S)-dihydroxy-(6E,10E,12E,14Z)-eicosatetraenoate + NADP(+) = 12-oxo-(5S)-hydroxy-(6E,8E,10E,14Z)-eicosatetraenoate + NADPH + H(+). It carries out the reaction an n-alkanal + NADP(+) = an alk-2-enal + NADPH + H(+). It catalyses the reaction hexanal + NADP(+) = (E)-hex-2-enal + NADPH + H(+). The enzyme catalyses octanal + NADP(+) = (2E)-octenal + NADPH + H(+). The catalysed reaction is decanal + NADP(+) = (2E)-decenal + NADPH + H(+). It carries out the reaction dodecanal + NADP(+) = (2E)-dodecenal + NADPH + H(+). It catalyses the reaction 4-hydroxynonanal + NADP(+) = (E)-4-hydroxynon-2-enal + NADPH + H(+). The enzyme catalyses pentan-2-one + NADP(+) = (E)-pent-3-en-2-one + NADPH + H(+). The catalysed reaction is nonan-2-one + NADP(+) = (3E)-nonen-2-one + NADPH + H(+). In terms of biological role, NAD(P)H-dependent oxidoreductase involved in metabolic inactivation of pro- and anti-inflammatory eicosanoids: prostaglandins (PG), leukotrienes (LT) and lipoxins (LX). Catalyzes with high efficiency the reduction of the 13,14 double bond of 15-oxoPGs, including 15-oxo-PGE1, 15-oxo-PGE2, 15-oxo-PGF1-alpha and 15-oxo-PGF2-alpha. Catalyzes with lower efficiency the oxidation of the hydroxyl group at C12 of LTB4 and its derivatives, converting them into biologically less active 12-oxo-LTB4 metabolites. Reduces 15-oxo-LXA4 to 13,14 dihydro-15-oxo-LXA4, enhancing neutrophil recruitment at the inflammatory site. Plays a role in metabolic detoxification of alkenals and ketones. Reduces alpha,beta-unsaturated alkenals and ketones, particularly those with medium-chain length, showing highest affinity toward (2E)-decenal and (3E)-3-nonen-2-one. May inactivate 4-hydroxy-2-nonenal, a cytotoxic lipid constituent of oxidized low-density lipoprotein particles. This chain is Prostaglandin reductase 1 (Ptgr1), found in Mus musculus (Mouse).